A 312-amino-acid chain; its full sequence is Pollen allergen Phl p 5.0101 (312 aa).

Residues Met1–Ala25 form the signal peptide.

The protein belongs to the Poa p IX/Phl p VI allergen family.

The protein resides in the secreted. This chain is Pollen allergen Phl p 5.0101, found in Phleum pratense (Common timothy).